Reading from the N-terminus, the 106-residue chain is UPF0060 membrane protein Oant_2511 (106 aa).

4 helical membrane passes run 3–23, 30–50, 60–80, and 84–104; these read FAIY…FWAW, PLWL…LTLI, AAYG…AEGA, and RWDV…LFAP.

This sequence belongs to the UPF0060 family.

The protein resides in the cell inner membrane. This Brucella anthropi (strain ATCC 49188 / DSM 6882 / CCUG 24695 / JCM 21032 / LMG 3331 / NBRC 15819 / NCTC 12168 / Alc 37) (Ochrobactrum anthropi) protein is UPF0060 membrane protein Oant_2511.